A 336-amino-acid polypeptide reads, in one-letter code: tRNA N6-adenosine threonylcarbamoyltransferase (336 aa).

The Fe cation site is built by His-114 and His-118. Residues 136–140 (LVSGG), Asp-169, Gly-182, Asp-186, and Asn-275 contribute to the substrate site. Asp-301 lines the Fe cation pocket.

The protein belongs to the KAE1 / TsaD family. Requires Fe(2+) as cofactor.

It is found in the cytoplasm. The catalysed reaction is L-threonylcarbamoyladenylate + adenosine(37) in tRNA = N(6)-L-threonylcarbamoyladenosine(37) in tRNA + AMP + H(+). Its function is as follows. Required for the formation of a threonylcarbamoyl group on adenosine at position 37 (t(6)A37) in tRNAs that read codons beginning with adenine. Is involved in the transfer of the threonylcarbamoyl moiety of threonylcarbamoyl-AMP (TC-AMP) to the N6 group of A37, together with TsaE and TsaB. TsaD likely plays a direct catalytic role in this reaction. The chain is tRNA N6-adenosine threonylcarbamoyltransferase from Streptococcus pneumoniae (strain JJA).